The following is an 85-amino-acid chain: Large ribosomal subunit protein bL27 (85 aa).

The interval 1–21 is disordered; sequence MAHKKAGGSTRNGRDSESKRL.

Belongs to the bacterial ribosomal protein bL27 family.

The sequence is that of Large ribosomal subunit protein bL27 from Ectopseudomonas mendocina (strain ymp) (Pseudomonas mendocina).